The sequence spans 392 residues: MLNAEQRAIIKATVPLLESGGEALTTHFYKMMLSEYPEVRPLFNQAHQASGDQPRALANGVLMYARHIDQLEQLGGLVGQIINKHVALQILPEHYPIVGSCLLRAIEEVLGKDIATPAVIDAWGAAYGQLADILIGAEENLYKEKEEAEGGWRGTREFRLVRREQESSEIVSFYFAPVDGMPVLKAEPGQYIGLKLDIDGAEQRRNYSLSALCDGKEYRISVKREAGGKVSNYLHDELKVGDTLQLFPPAGDFTLAASDKPLVLISGGVGITPTLAMLQAALQTRREVHFIHCARNGAVHAFRDWIDGLAARHPQLKRFYCYAEPEGGAAADAVGLLSEDLLAEWLPQERDVDAYFLGPKGFMAAVKRQLKGLGVPEQQSRYEFFGPAAALE.

In terms of domain architecture, Globin spans 1–139 (MLNAEQRAII…LADILIGAEE (139 aa)). Position 85 (H85) interacts with heme b. Active-site charge relay system residues include Y95 and E138. The interval 150–392 (GGWRGTREFR…EFFGPAAALE (243 aa)) is reductase. Residues 153 to 256 (RGTREFRLVR…FPPAGDFTLA (104 aa)) enclose the FAD-binding FR-type domain. Residues Y191 and 205 to 208 (RNYS) each bind FAD. 268-273 (GVGITP) serves as a coordination point for NADP(+). An FAD-binding site is contributed by 384–387 (FFGP).

Belongs to the globin family. Two-domain flavohemoproteins subfamily. It in the C-terminal section; belongs to the flavoprotein pyridine nucleotide cytochrome reductase family. It depends on heme b as a cofactor. Requires FAD as cofactor.

The enzyme catalyses 2 nitric oxide + NADPH + 2 O2 = 2 nitrate + NADP(+) + H(+). It catalyses the reaction 2 nitric oxide + NADH + 2 O2 = 2 nitrate + NAD(+) + H(+). In terms of biological role, is involved in NO detoxification in an aerobic process, termed nitric oxide dioxygenase (NOD) reaction that utilizes O(2) and NAD(P)H to convert NO to nitrate, which protects the bacterium from various noxious nitrogen compounds. Therefore, plays a central role in the inducible response to nitrosative stress. The sequence is that of Flavohemoprotein from Pseudomonas putida (strain ATCC 47054 / DSM 6125 / CFBP 8728 / NCIMB 11950 / KT2440).